Reading from the N-terminus, the 423-residue chain is Type II methyltransferase M.NgoBV (423 aa).

Residues 4-423 (IKFIDLFSGM…AVSERLLHTL (420 aa)) form the SAM-dependent MTase C5-type domain. Residue Cys80 is part of the active site.

It belongs to the class I-like SAM-binding methyltransferase superfamily. C5-methyltransferase family.

The enzyme catalyses a 2'-deoxycytidine in DNA + S-adenosyl-L-methionine = a 5-methyl-2'-deoxycytidine in DNA + S-adenosyl-L-homocysteine + H(+). In terms of biological role, a methylase, recognizes the double-stranded sequence 5'-GGNNCC-3', methylates C-5 on both strands, and protects the DNA from cleavage by the NgoBV endonuclease. This Neisseria gonorrhoeae protein is Type II methyltransferase M.NgoBV (ngoBVM).